Consider the following 250-residue polypeptide: 3-deoxy-manno-octulosonate cytidylyltransferase (250 aa).

It belongs to the KdsB family.

The protein localises to the cytoplasm. The catalysed reaction is 3-deoxy-alpha-D-manno-oct-2-ulosonate + CTP = CMP-3-deoxy-beta-D-manno-octulosonate + diphosphate. Its pathway is nucleotide-sugar biosynthesis; CMP-3-deoxy-D-manno-octulosonate biosynthesis; CMP-3-deoxy-D-manno-octulosonate from 3-deoxy-D-manno-octulosonate and CTP: step 1/1. It participates in bacterial outer membrane biogenesis; lipopolysaccharide biosynthesis. Its function is as follows. Activates KDO (a required 8-carbon sugar) for incorporation into bacterial lipopolysaccharide in Gram-negative bacteria. The sequence is that of 3-deoxy-manno-octulosonate cytidylyltransferase from Sinorhizobium medicae (strain WSM419) (Ensifer medicae).